Reading from the N-terminus, the 60-residue chain is Arabinogalactan protein 12 (60 aa).

A signal peptide spans 1 to 27 (MESMKMKLIVVLMVAIVAFSAVGNVAA). Residue Gln-28 is modified to Pyrrolidone carboxylic acid. Residues Pro-32, Pro-34, and Pro-36 each carry the 4-hydroxyproline modification. Residues Pro-32, Pro-34, and Pro-36 are each glycosylated (O-linked (Ara...) hydroxyproline). Ser-38 is lipidated: GPI-anchor amidated serine. Positions 39 to 60 (DAAMFVPALFASVAALASGFLF) are cleaved as a propeptide — removed in mature form.

It belongs to the AG-peptide AGP family. Contains 4-hydroxyproline; hydroxylated on Pro-32, Pro-34 and Pro-36. In terms of processing, O-glycosylated on hydroxyprolines; noncontiguous hydroxylproline residues are glycosylated with arabinogalactan. Expressed in reproductive tissues. Expressed in chalaza, funiculus, stigma, septum, style and transmitting tract.

The protein localises to the cell membrane. Its function is as follows. Proteoglycan that seems to be implicated in diverse developmental roles such as differentiation, cell-cell recognition, embryogenesis and programmed cell death. The polypeptide is Arabinogalactan protein 12 (Arabidopsis thaliana (Mouse-ear cress)).